Reading from the N-terminus, the 415-residue chain is 3-oxoacyl-[acyl-carrier-protein] synthase 2 (415 aa).

The 410-residue stretch at lysine 3–lysine 412 folds into the Ketosynthase family 3 (KS3) domain. Active-site for beta-ketoacyl synthase activity residues include cysteine 164, histidine 304, and histidine 342.

The protein belongs to the thiolase-like superfamily. Beta-ketoacyl-ACP synthases family. Homodimer.

It catalyses the reaction a fatty acyl-[ACP] + malonyl-[ACP] + H(+) = a 3-oxoacyl-[ACP] + holo-[ACP] + CO2. The catalysed reaction is (9Z)-hexadecenoyl-[ACP] + malonyl-[ACP] + H(+) = 3-oxo-(11Z)-octadecenoyl-[ACP] + holo-[ACP] + CO2. The protein operates within lipid metabolism; fatty acid biosynthesis. Involved in the type II fatty acid elongation cycle. Catalyzes the elongation of a wide range of acyl-ACP by the addition of two carbons from malonyl-ACP to an acyl acceptor. Can efficiently catalyze the conversion of palmitoleoyl-ACP (cis-hexadec-9-enoyl-ACP) to cis-vaccenoyl-ACP (cis-octadec-11-enoyl-ACP), an essential step in the thermal regulation of fatty acid composition. This is 3-oxoacyl-[acyl-carrier-protein] synthase 2 (fabF) from Vibrio harveyi (Beneckea harveyi).